Here is a 430-residue protein sequence, read N- to C-terminus: Histidinol dehydrogenase (430 aa).

3 residues coordinate NAD(+): Tyr-129, Gln-190, and Asn-213. Substrate contacts are provided by Ser-236, Gln-258, and His-261. Zn(2+) is bound by residues Gln-258 and His-261. Catalysis depends on proton acceptor residues Glu-326 and His-327. Substrate is bound by residues His-327, Asp-360, Glu-414, and His-419. Asp-360 is a binding site for Zn(2+). His-419 contributes to the Zn(2+) binding site.

This sequence belongs to the histidinol dehydrogenase family. Zn(2+) serves as cofactor.

The catalysed reaction is L-histidinol + 2 NAD(+) + H2O = L-histidine + 2 NADH + 3 H(+). It participates in amino-acid biosynthesis; L-histidine biosynthesis; L-histidine from 5-phospho-alpha-D-ribose 1-diphosphate: step 9/9. Catalyzes the sequential NAD-dependent oxidations of L-histidinol to L-histidinaldehyde and then to L-histidine. This Gluconobacter oxydans (strain 621H) (Gluconobacter suboxydans) protein is Histidinol dehydrogenase.